Consider the following 159-residue polypeptide: MSENAEAPKQPVFALQRIYLKDLSFESPNSPAVFQSEWKPQVNMDLNTENKKVSDNQWEVVLTLTITAKLADKTAFVIEVQQAGVFMIDGLSPQQLAQTLGAFCPNILFPYARETIDMLAVKGSFPALMLQPVNFDAIYAEAVKRQQAQQAAPAEEAKH.

Belongs to the SecB family. In terms of assembly, homotetramer, a dimer of dimers. One homotetramer interacts with 1 SecA dimer.

It localises to the cytoplasm. One of the proteins required for the normal export of preproteins out of the cell cytoplasm. It is a molecular chaperone that binds to a subset of precursor proteins, maintaining them in a translocation-competent state. It also specifically binds to its receptor SecA. The protein is Protein-export protein SecB of Hahella chejuensis (strain KCTC 2396).